We begin with the raw amino-acid sequence, 528 residues long: MALKNKDISSIIKERIRNYKIEKINDEVGKVISIGDGIALVSGLKNVKNGELIIFNESVYGLTLNLEIDYIGVAILGNDTLLKEGDEAKRTFEVISIKVGPEILGRVINALGEPIDGKGEIDSEIHRQIFRVAPGVMARESVNEALSTGILAIDSMIPIGKGQRELIIGDRQTGKTAIAIDAIINQKGKNVKCIYVAIGQKNSTVAQIVRKLENHGAMEYTSVVSASASELSPMQYLAPYTGVTIAEEFMETGQDVLIVYDDLSKHAVAYRTLSLLLRRPPGREAYPGDVFYLHSQLLERAAKVNKENGGGSITALPIIETQQGDISAYIATNVISITDGQIFTKESLFNSGQRPAIDVGFSVSRVGSSAQISAMKEVTSSLKLQLAQYNEMLAFSQFGSDLDDSTKAILENGSKIYEILKQDQYSPIDQYTQVILFLAIKQNLINPIPLEYISKFKKAIIHKFNKDAKALNLKTLIRNDKKLSTKLRNEITKIIIEEIKNITKSIANYNPKDHRPIPEEYAKLVESK.

An ATP-binding site is contributed by 169–176 (GDRQTGKT).

This sequence belongs to the ATPase alpha/beta chains family. As to quaternary structure, F-type ATPases have 2 components, CF(1) - the catalytic core - and CF(0) - the membrane proton channel. CF(1) has five subunits: alpha(3), beta(3), gamma(1), delta(1), epsilon(1). CF(0) has three main subunits: a(1), b(2) and c(9-12). The alpha and beta chains form an alternating ring which encloses part of the gamma chain. CF(1) is attached to CF(0) by a central stalk formed by the gamma and epsilon chains, while a peripheral stalk is formed by the delta and b chains.

Its subcellular location is the cell membrane. The enzyme catalyses ATP + H2O + 4 H(+)(in) = ADP + phosphate + 5 H(+)(out). Produces ATP from ADP in the presence of a proton gradient across the membrane. The alpha chain is a regulatory subunit. The polypeptide is ATP synthase subunit alpha 1 (Mycoplasmopsis pulmonis (strain UAB CTIP) (Mycoplasma pulmonis)).